The chain runs to 347 residues: D-alanine--D-alanine ligase (347 aa).

An ATP-grasp domain is found at 138 to 339; sequence KILCSHAGIP…YSQVIETILA (202 aa). Residue 171–226 participates in ATP binding; it reads SDRFTFPLFVKPVDAGSSFGCTFVDFFEQLPVAIEHALQHGKSAIVEPALDAPEVF. The Mg(2+) site is built by Asp-296, Glu-308, and Asn-310.

The protein belongs to the D-alanine--D-alanine ligase family. Requires Mg(2+) as cofactor. It depends on Mn(2+) as a cofactor.

It localises to the cytoplasm. The catalysed reaction is 2 D-alanine + ATP = D-alanyl-D-alanine + ADP + phosphate + H(+). It functions in the pathway cell wall biogenesis; peptidoglycan biosynthesis. Its function is as follows. Cell wall formation. The sequence is that of D-alanine--D-alanine ligase from Tropheryma whipplei (strain Twist) (Whipple's bacillus).